Here is a 154-residue protein sequence, read N- to C-terminus: 6,7-dimethyl-8-ribityllumazine synthase (154 aa).

5-amino-6-(D-ribitylamino)uracil contacts are provided by residues Trp22, 56–58 (AWE), and 80–82 (CVV). 85–86 (DT) contributes to the (2S)-2-hydroxy-3-oxobutyl phosphate binding site. His88 (proton donor) is an active-site residue. Asn113 lines the 5-amino-6-(D-ribitylamino)uracil pocket. Arg127 is a (2S)-2-hydroxy-3-oxobutyl phosphate binding site.

This sequence belongs to the DMRL synthase family. As to quaternary structure, forms an icosahedral capsid composed of 60 subunits, arranged as a dodecamer of pentamers.

The enzyme catalyses (2S)-2-hydroxy-3-oxobutyl phosphate + 5-amino-6-(D-ribitylamino)uracil = 6,7-dimethyl-8-(1-D-ribityl)lumazine + phosphate + 2 H2O + H(+). Its pathway is cofactor biosynthesis; riboflavin biosynthesis; riboflavin from 2-hydroxy-3-oxobutyl phosphate and 5-amino-6-(D-ribitylamino)uracil: step 1/2. Its function is as follows. Catalyzes the formation of 6,7-dimethyl-8-ribityllumazine by condensation of 5-amino-6-(D-ribitylamino)uracil with 3,4-dihydroxy-2-butanone 4-phosphate. This is the penultimate step in the biosynthesis of riboflavin. This chain is 6,7-dimethyl-8-ribityllumazine synthase, found in Xylella fastidiosa (strain 9a5c).